The primary structure comprises 205 residues: Glycerol-3-phosphate acyltransferase (205 aa).

The Periplasmic segment spans residues 1–3; sequence MSA. Residues 4–24 traverse the membrane as a helical segment; it reads IAPGMILIAYLCGSISSAILV. Topologically, residues 25-52 are cytoplasmic; it reads CRLCGLPDPRTSGSGNPGATNVLRIGGK. The helical transmembrane segment at 53–73 threads the bilayer; the sequence is GAAVAVLIFDVLKGMLPVWGA. Residues 74–80 are Periplasmic-facing; the sequence is YELGVSP. The helical transmembrane segment at 81–101 threads the bilayer; that stretch reads FWLGLIAIAACLGHIWPVFFG. Topologically, residues 102–111 are cytoplasmic; the sequence is FKGGKGVATA. The helical transmembrane segment at 112–132 threads the bilayer; that stretch reads FGAIAPISWDLTGVMAGTWLL. Residues 133–137 are Periplasmic-facing; sequence TVLLS. Residues 138–158 form a helical membrane-spanning segment; that stretch reads GYSSLGAIVSALIAPFYVWWF. The Cytoplasmic portion of the chain corresponds to 159–205; sequence KPQFTFPVSMLSCLILLRHHDNIQRLWRRQETKIWTKFKRKREKDPE.

This sequence belongs to the PlsY family. Probably interacts with PlsX.

It is found in the cell inner membrane. It catalyses the reaction sn-glycerol 3-phosphate + an acyl-CoA = a 1-acyl-sn-glycero-3-phosphate + CoA. The enzyme catalyses a fatty acyl-[ACP] + sn-glycerol 3-phosphate = a 1-acyl-sn-glycero-3-phosphate + holo-[ACP]. Its pathway is lipid metabolism; phospholipid metabolism. Catalyzes the transfer of an acyl group from acyl-ACP to glycerol-3-phosphate (G3P) to form lysophosphatidic acid (LPA). This enzyme can also utilize acyl-CoA as fatty acyl donor, but not acyl-PO(4). This Shigella flexneri serotype 5b (strain 8401) protein is Glycerol-3-phosphate acyltransferase.